The chain runs to 148 residues: uncharacterized protein (148 aa).

The tract at residues 1 to 108 (MGRAGPRSTA…PSRLRGKRSL (108 aa)) is disordered. Residues 22-42 (RRPRPWQKPTSPRRLHRRRPR) are compositionally biased toward basic residues. The segment covering 88 to 97 (DTSASNPSQR) has biased composition (polar residues).

This is an uncharacterized protein from Homo sapiens (Human).